The primary structure comprises 286 residues: Phosphatidylglycerol--prolipoprotein diacylglyceryl transferase (286 aa).

The next 7 membrane-spanning stretches (helical) occupy residues 29-49 (IHWY…VGTY), 66-86 (LVFY…VFFY), 101-121 (VWEG…AMML), 130-150 (FLDL…LGRI), 181-201 (PSQL…LFWF), 209-229 (AAVA…VEFV), and 250-270 (LSLP…RHPA). Arginine 149 is an a 1,2-diacyl-sn-glycero-3-phospho-(1'-sn-glycerol) binding site.

Belongs to the Lgt family.

Its subcellular location is the cell inner membrane. The catalysed reaction is L-cysteinyl-[prolipoprotein] + a 1,2-diacyl-sn-glycero-3-phospho-(1'-sn-glycerol) = an S-1,2-diacyl-sn-glyceryl-L-cysteinyl-[prolipoprotein] + sn-glycerol 1-phosphate + H(+). It participates in protein modification; lipoprotein biosynthesis (diacylglyceryl transfer). In terms of biological role, catalyzes the transfer of the diacylglyceryl group from phosphatidylglycerol to the sulfhydryl group of the N-terminal cysteine of a prolipoprotein, the first step in the formation of mature lipoproteins. The protein is Phosphatidylglycerol--prolipoprotein diacylglyceryl transferase of Teredinibacter turnerae (strain ATCC 39867 / T7901).